The following is a 256-amino-acid chain: 5-oxoprolinase subunit A 2 (256 aa).

Belongs to the LamB/PxpA family. As to quaternary structure, forms a complex composed of PxpA, PxpB and PxpC.

It carries out the reaction 5-oxo-L-proline + ATP + 2 H2O = L-glutamate + ADP + phosphate + H(+). Functionally, catalyzes the cleavage of 5-oxoproline to form L-glutamate coupled to the hydrolysis of ATP to ADP and inorganic phosphate. In Bradyrhizobium diazoefficiens (strain JCM 10833 / BCRC 13528 / IAM 13628 / NBRC 14792 / USDA 110), this protein is 5-oxoprolinase subunit A 2.